The following is a 374-amino-acid chain: Putative F-box/kelch-repeat protein At4g39756 (374 aa).

Positions 17–63 (CPSFLSLPEEILVNCLARIPKSYYPKLSLVCKSFCSLILSMELYVER) constitute an F-box domain. Kelch repeat units lie at residues 135–180 (ELYA…VING), 181–227 (KIYV…GMAV), 231–278 (KIYV…RQSC), and 280–308 (WYDT…ILEV).

The polypeptide is Putative F-box/kelch-repeat protein At4g39756 (Arabidopsis thaliana (Mouse-ear cress)).